Reading from the N-terminus, the 308-residue chain is Putative S-adenosyl-L-methionine-dependent methyltransferase Mmcs_1045 (308 aa).

S-adenosyl-L-methionine is bound by residues Asp133 and 162–163 (DL).

This sequence belongs to the UPF0677 family.

Functionally, exhibits S-adenosyl-L-methionine-dependent methyltransferase activity. The protein is Putative S-adenosyl-L-methionine-dependent methyltransferase Mmcs_1045 of Mycobacterium sp. (strain MCS).